A 148-amino-acid polypeptide reads, in one-letter code: Receptor activity-modifying protein 1 (148 aa).

The first 26 residues, 1–26 (MAPGLRGLPRCGLWLLLAHHLFMVTA), serve as a signal peptide directing secretion. Intrachain disulfides connect C27-C82, C40-C72, and C57-C104. Topologically, residues 27–118 (CRDPDYGTLI…RALRDPPNSI (92 aa)) are extracellular. The helical transmembrane segment at 119 to 140 (LCPFIALPITVTLLMTALVVWR) threads the bilayer. The Cytoplasmic segment spans residues 141-148 (SKRTEGIV).

Belongs to the RAMP family. As to quaternary structure, heterodimer of CALCRL and RAMP1; the interaction induces allosteric modulation of CALCRL function and CGRP1/CALCA and CGRP2/CALCB ligand specificity. Heterodimer of CALCR and RAMP1; interaction forms the AMYR1 receptor complex for amylin/IAPP and CGRP1/CALCA ligands. Expressed predominantly in the thymus, skeletal muscle, embryonic and adult brain, embryonic and adult lung, and colon.

Its subcellular location is the cell membrane. Accessory protein that interacts with and modulates the function of G-protein coupled receptors including calcitonin gene-related peptide type 1 receptor (CALCRL) and calcitonin receptor (CALCR). Required for the transport of CALCRL to the plasma membrane. Together with CALCRL, form the receptor complex for the calcitonin gene-related peptides CGRP1/CALCA and CGRP2/CALCB. Together with CALCR, form the AMYR1 receptor complex for amylin/IAPP and CGRP1/CALCA. The polypeptide is Receptor activity-modifying protein 1 (Mus musculus (Mouse)).